The following is a 1921-amino-acid chain: Endoribonuclease Dicer (1921 aa).

The 177-residue stretch at 51-227 (LLEAALDHNT…ELEEKIKKLE (177 aa)) folds into the Helicase ATP-binding domain. 64 to 71 (LNTGSGKT) contributes to the ATP binding site. The short motif at 175–178 (DECH) is the DECH box element. Positions 409-433 (YVSWSDSEDDDEDEEIEEKEKPETN) are disordered. Residues 414 to 425 (DSEDDDEDEEIE) are compositionally biased toward acidic residues. The Helicase C-terminal domain maps to 433-602 (NFPSPFTNIL…SVDTSETETE (170 aa)). The Dicer dsRNA-binding fold domain maps to 630 to 722 (AIGHINRYCA…MPVGKETVKY (93 aa)). The interval 727 to 746 (DLHDEEETSVPGRPGSTKRR) is disordered. The 148-residue stretch at 895–1042 (KFMEDIEKSE…LVPELCAIHP (148 aa)) folds into the PAZ domain. Residues 1270–1289 (NLSKDKVDSEKNTSSGYSSK) form a disordered region. RNase III domains lie at 1277-1404 (DSEK…EETT) and 1665-1823 (FENF…MDSG). 4 residues coordinate Mg(2+): Glu-1317, Asp-1396, Glu-1399, and Glu-1704. The disordered stretch occupies residues 1782 to 1801 (QGMDSELRRSEEDEEKEEDI). Positions 1809 and 1812 each coordinate Mg(2+). One can recognise a DRBM domain in the interval 1848 to 1913 (VPRSPVRELL…ARRALRSLKA (66 aa)).

Belongs to the helicase family. Dicer subfamily. As to quaternary structure, component of the RISC loading complex (RLC), or micro-RNA (miRNA) loading complex (miRLC), which is composed of DICER1, AGO2 and TARBP2; DICER1 and TARBP2 are required to process precursor miRNAs (pre-miRNAs) to mature miRNAs and then load them onto AGO2. Note that the trimeric RLC/miRLC is also referred to as RISC. Mg(2+) is required as a cofactor. Mn(2+) serves as cofactor.

It localises to the cytoplasm. It catalyses the reaction Endonucleolytic cleavage to 5'-phosphomonoester.. Functionally, double-stranded RNA (dsRNA) endoribonuclease playing a central role in short dsRNA-mediated post-transcriptional gene silencing. Cleaves naturally occurring long dsRNAs and short hairpin pre-microRNAs (miRNA) into fragments of twenty-one to twenty-three nucleotides with 3' overhang of two nucleotides, producing respectively short interfering RNAs (siRNA) and mature microRNAs. SiRNAs and miRNAs serve as guide to direct the RNA-induced silencing complex (RISC) to complementary RNAs to degrade them or prevent their translation. Gene silencing mediated by siRNAs, also called RNA interference, controls the elimination of transcripts from mobile and repetitive DNA elements of the genome but also the degradation of exogenous RNA of viral origin for instance. The miRNA pathway on the other side is a mean to specifically regulate the expression of target genes. The protein is Endoribonuclease Dicer (DICER1) of Gallus gallus (Chicken).